The primary structure comprises 181 residues: Cyclic AMP-dependent transcription factor ATF-3 (181 aa).

The disordered stretch occupies residues 76 to 96; it reads VTKSEVAPEEDERKRRRRERN. Residue lysine 78 forms a Glycyl lysine isopeptide (Lys-Gly) (interchain with G-Cter in SUMO2) linkage. The bZIP domain maps to 86 to 149; it reads DERKRRRRER…QHLIYMLNLH (64 aa). Residues 88 to 110 are basic motif; it reads RKRRRRERNKIAAAKCRNKKKEK. The tract at residues 114-142 is leucine-zipper; it reads LQKESEKLESVNAELKAQIEELKNEKQHL. Position 162 is a phosphothreonine (threonine 162). Lysine 175 is covalently cross-linked (Glycyl lysine isopeptide (Lys-Gly) (interchain with G-Cter in SUMO2)).

It belongs to the bZIP family. ATF subfamily. As to quaternary structure, ATF3 alone can bind DNA, but it preferentially forms heteromeric complexes with JUN and JUNB and does not interact with FOS. Expressed in tissues containing skeletal muscle or smooth muscle. Expressed in cutaneous and muscular sensory neurons.

It is found in the nucleus. Functionally, this protein binds the cAMP response element (CRE) (consensus: 5'-GTGACGT[AC][AG]-3'), a sequence present in many viral and cellular promoters. Represses transcription from promoters with ATF sites. It may repress transcription by stabilizing the binding of inhibitory cofactors at the promoter. In Rattus norvegicus (Rat), this protein is Cyclic AMP-dependent transcription factor ATF-3 (Atf3).